Here is a 202-residue protein sequence, read N- to C-terminus: Adenylyl-sulfate kinase (202 aa).

35–42 (GLSGSGKS) is an ATP binding site. Catalysis depends on serine 109, which acts as the Phosphoserine intermediate.

The protein belongs to the APS kinase family.

It catalyses the reaction adenosine 5'-phosphosulfate + ATP = 3'-phosphoadenylyl sulfate + ADP + H(+). Its pathway is sulfur metabolism; hydrogen sulfide biosynthesis; sulfite from sulfate: step 2/3. Functionally, catalyzes the synthesis of activated sulfate. The protein is Adenylyl-sulfate kinase of Bacteroides fragilis (strain YCH46).